Consider the following 95-residue polypeptide: MRAIGKLPKGVLILEFIGMMLLAVALLSVSDSLSLPEPFSRPEVQILMIFLGVLLMLPAAVVVILQVAKRLAPQLMNRPPQYSRSEREKDNDANH.

This is an uncharacterized protein from Escherichia coli (strain K12).